A 272-amino-acid polypeptide reads, in one-letter code: tRNA pseudouridine synthase A (272 aa).

The active-site Nucleophile is D52. Y110 contributes to the substrate binding site.

It belongs to the tRNA pseudouridine synthase TruA family. In terms of assembly, homodimer.

The catalysed reaction is uridine(38/39/40) in tRNA = pseudouridine(38/39/40) in tRNA. Functionally, formation of pseudouridine at positions 38, 39 and 40 in the anticodon stem and loop of transfer RNAs. This chain is tRNA pseudouridine synthase A, found in Cupriavidus taiwanensis (strain DSM 17343 / BCRC 17206 / CCUG 44338 / CIP 107171 / LMG 19424 / R1) (Ralstonia taiwanensis (strain LMG 19424)).